The primary structure comprises 113 residues: Hydrogenase maturation factor HypA (113 aa).

Residue histidine 2 coordinates Ni(2+). Positions 73, 76, 89, and 92 each coordinate Zn(2+).

Belongs to the HypA/HybF family.

In terms of biological role, involved in the maturation of [NiFe] hydrogenases. Required for nickel insertion into the metal center of the hydrogenase. This Rhodopseudomonas palustris (strain BisA53) protein is Hydrogenase maturation factor HypA.